A 418-amino-acid polypeptide reads, in one-letter code: EPS I polysaccharide export inner membrane protein EpsF (418 aa).

The next 10 membrane-spanning stretches (helical) occupy residues 21–41 (VLVV…LPII), 45–65 (CAAI…LATA), 142–162 (PLLV…IAIY), 170–190 (YVVF…GSAI), 222–242 (AGTH…VLFL), 262–282 (LIVL…EFVM), 296–316 (SAWE…AWLL), 326–346 (MAFL…PAVG), 347–367 (ARLF…FFFA), and 377–397 (KTLA…IVSA).

This sequence to S.marcescens SfuB.

The protein resides in the cell inner membrane. Functionally, probably involved in polymerization and/or export of exopolysaccharide EPS I which functions as a virulence factor. May play a role in export of EPS I or its intermediates across the membranes. In Ralstonia nicotianae (strain ATCC BAA-1114 / GMI1000) (Ralstonia solanacearum), this protein is EPS I polysaccharide export inner membrane protein EpsF (epsF).